A 419-amino-acid polypeptide reads, in one-letter code: Serine--tRNA ligase (419 aa).

Position 226-228 (226-228 (TSE)) interacts with L-serine. Residues 257–259 (RRE) and Val-273 contribute to the ATP site. Glu-280 contacts L-serine. 344-347 (ELTS) is a binding site for ATP. Thr-379 is a binding site for L-serine.

This sequence belongs to the class-II aminoacyl-tRNA synthetase family. Type-1 seryl-tRNA synthetase subfamily. In terms of assembly, homodimer. The tRNA molecule binds across the dimer.

It is found in the cytoplasm. It catalyses the reaction tRNA(Ser) + L-serine + ATP = L-seryl-tRNA(Ser) + AMP + diphosphate + H(+). The catalysed reaction is tRNA(Sec) + L-serine + ATP = L-seryl-tRNA(Sec) + AMP + diphosphate + H(+). The protein operates within aminoacyl-tRNA biosynthesis; selenocysteinyl-tRNA(Sec) biosynthesis; L-seryl-tRNA(Sec) from L-serine and tRNA(Sec): step 1/1. In terms of biological role, catalyzes the attachment of serine to tRNA(Ser). Is also able to aminoacylate tRNA(Sec) with serine, to form the misacylated tRNA L-seryl-tRNA(Sec), which will be further converted into selenocysteinyl-tRNA(Sec). In Corynebacterium efficiens (strain DSM 44549 / YS-314 / AJ 12310 / JCM 11189 / NBRC 100395), this protein is Serine--tRNA ligase.